A 378-amino-acid chain; its full sequence is Branched-chain-amino-acid aminotransferase (378 aa).

Lysine 213 carries the post-translational modification N6-(pyridoxal phosphate)lysine.

The protein belongs to the class-IV pyridoxal-phosphate-dependent aminotransferase family. Homodimer. It depends on pyridoxal 5'-phosphate as a cofactor.

It carries out the reaction L-leucine + 2-oxoglutarate = 4-methyl-2-oxopentanoate + L-glutamate. The catalysed reaction is L-isoleucine + 2-oxoglutarate = (S)-3-methyl-2-oxopentanoate + L-glutamate. The enzyme catalyses L-valine + 2-oxoglutarate = 3-methyl-2-oxobutanoate + L-glutamate. Catalyzes the first reaction in the catabolism of the essential branched chain amino acids leucine, isoleucine, and valine. In Dictyostelium discoideum (Social amoeba), this protein is Branched-chain-amino-acid aminotransferase (bcaA).